Here is a 154-residue protein sequence, read N- to C-terminus: Cytochrome c-type biogenesis protein CcmE (154 aa).

Residues 1–7 lie on the Cytoplasmic side of the membrane; sequence MKPRQKR. The helical; Signal-anchor for type II membrane protein transmembrane segment at 8-28 threads the bilayer; sequence LVLIVGIVAAVGVAAALVLNA. Residues 29 to 154 are Periplasmic-facing; it reads FQSNLVFFYS…GETVVKETRP (126 aa). 2 residues coordinate heme: His121 and Tyr125. The tract at residues 131–154 is disordered; sequence AEALQRAGASNQKLGETVVKETRP.

Belongs to the CcmE/CycJ family.

The protein localises to the cell inner membrane. Functionally, heme chaperone required for the biogenesis of c-type cytochromes. Transiently binds heme delivered by CcmC and transfers the heme to apo-cytochromes in a process facilitated by CcmF and CcmH. The protein is Cytochrome c-type biogenesis protein CcmE of Methylibium petroleiphilum (strain ATCC BAA-1232 / LMG 22953 / PM1).